The following is a 459-amino-acid chain: Cysteine--tRNA ligase (459 aa).

Cys31 contacts Zn(2+). A 'HIGH' region motif is present at residues 33-43; sequence PTVYYNPHIGN. Zn(2+)-binding residues include Cys216, His241, and Glu245. The 'KMSKS' region motif lies at 274 to 278; it reads KMSKS. Lys277 provides a ligand contact to ATP.

It belongs to the class-I aminoacyl-tRNA synthetase family. Monomer. Zn(2+) serves as cofactor.

The protein resides in the cytoplasm. The enzyme catalyses tRNA(Cys) + L-cysteine + ATP = L-cysteinyl-tRNA(Cys) + AMP + diphosphate. The chain is Cysteine--tRNA ligase from Rickettsia peacockii (strain Rustic).